Reading from the N-terminus, the 651-residue chain is ATP-dependent zinc metalloprotease FtsH (651 aa).

The Extracellular segment spans residues 1–134 (MIVFATILFG…FTTDPQTAGP (134 aa)). The helical transmembrane segment at 135 to 155 (WARAIAVMAPFVLILLLFFLM) threads the bilayer. The Cytoplasmic segment spans residues 156-651 (TRTGRSASQS…PAMSVNGHRG (496 aa)). ATP is bound at residue 229–236 (GPPGTGKT). Histidine 451 contacts Zn(2+). Glutamate 452 is an active-site residue. Zn(2+) is bound by residues histidine 455 and aspartate 527.

In the central section; belongs to the AAA ATPase family. This sequence in the C-terminal section; belongs to the peptidase M41 family. Homohexamer. Zn(2+) serves as cofactor.

It is found in the cell membrane. Its function is as follows. Acts as a processive, ATP-dependent zinc metallopeptidase for both cytoplasmic and membrane proteins. Plays a role in the quality control of integral membrane proteins. The protein is ATP-dependent zinc metalloprotease FtsH of Rubrobacter xylanophilus (strain DSM 9941 / JCM 11954 / NBRC 16129 / PRD-1).